The chain runs to 389 residues: Indole-3-acetate monooxygenase (389 aa).

Belongs to the HpaH/HsaA monooxygenase family.

It carries out the reaction (indol-3-yl)acetate + NADH + O2 + H(+) = 2-hydroxy-(1H-indol-3-yl)acetate + NAD(+) + H2O. The enzyme catalyses indole + NADH + O2 + H(+) = indoxyl + NAD(+) + H2O. In terms of biological role, involved in the degradation of the plant hormone indole-3-acetic acid (IAA). Catalyzes the first step of the pathway, the conversion of IAA to 2-hydroxy-IAA (2-OH-IAA). Can also convert indole to indoxyl, which spontaneously dimerizes in the presence of oxygen to form the blue pigment indigo. In Acinetobacter baumannii (strain ATCC 19606 / DSM 30007 / JCM 6841 / CCUG 19606 / CIP 70.34 / NBRC 109757 / NCIMB 12457 / NCTC 12156 / 81), this protein is Indole-3-acetate monooxygenase.